A 419-amino-acid chain; its full sequence is MSYDQIEVPDDGEKITVDEETGELSVPDNPIIPIIHGDGIGTDVGPAAQKVLDAAAEATGRSVSWMRVYAGSSARDKYDENLPEDTVSAIRNHRVAIKGPLTTPVGAGFRSLNVALRKKLDLYANVRPTYHLDGVPSPVKNPSAMDMVTFRENTEDVYAGIEWEAGTDEVQKVKEFVEEEMGADGVIHDGPVGIGIKPITEFGTKRLVREAIEYALENDRPSVTLVHKGNIMKFTEGAFRDWGYELAEEEFGDVTITEDELWEEYDGERPEDKVVVKDRIADNMLQQLLTRTADYDVIATMNLNGDYMSDAAGAQIGGLGIAPGANFGEGLCLAEPVHGSAPKYAGEDKVNPTAMILSGRLMFEYMGWKDAGKLIRDAVEKTISDGDVTYDLERQIEGGNKLATSEYADKVVENIKELA.

T102 serves as a coordination point for NADP(+). D-threo-isocitrate contacts are provided by S111, N113, R117, R127, and R151. Residue D306 coordinates Mg(2+). NADP(+) is bound by residues 338–344, N351, Y390, and R394; that span reads HGSAPKY.

It belongs to the isocitrate and isopropylmalate dehydrogenases family. In terms of assembly, homodimer. Mg(2+) serves as cofactor. Mn(2+) is required as a cofactor.

It carries out the reaction D-threo-isocitrate + NADP(+) = 2-oxoglutarate + CO2 + NADPH. Its function is as follows. Catalyzes the oxidative decarboxylation of isocitrate to 2-oxoglutarate and carbon dioxide with the concomitant reduction of NADP(+). This is Isocitrate dehydrogenase [NADP] from Haloferax volcanii (strain ATCC 29605 / DSM 3757 / JCM 8879 / NBRC 14742 / NCIMB 2012 / VKM B-1768 / DS2) (Halobacterium volcanii).